Consider the following 415-residue polypeptide: MQMSYAIRCAFYQLLLAALMLVAMLQLLYLSLLSGLHGQEEQEQYFEFFPPSPRSVDQVKSQLRTALASGGVLDASGDYRVYRGLLKTTMDPNDVILATHASVDNLLHLSGLLERWEGPLSVSVFAATKEEAQLATVLAYALSSHCPEMRARVAMHLVCPSRYEAAVPDPREPGEFALLRSCQEVFDKLARVAQPGINYALGTNTSYPNNLLRNLAREEANYALVIDVDMVPSEGLWRGLREMLDQSNHWDGTALVVPAFEIRRSRRMPMNKNELVQLYQVGEVRPFYYGLCTPCHAPTNYSRWVNLPEESLLRPAYVVPWRDPWEPFYVAGGKVPTFDERFRQYGFNRISQACELHVAGFNFEVLNEGFLVHKGFKEALKFHPQKEAENQRNKILYRQFKQELKARYPNSPHRC.

Residues 1-8 (MQMSYAIR) are Cytoplasmic-facing. The chain crosses the membrane as a helical; Signal-anchor for type II membrane protein span at residues 9–36 (CAFYQLLLAALMLVAMLQLLYLSLLSGL). The Lumenal segment spans residues 37 to 415 (HGQEEQEQYF…ARYPNSPHRC (379 aa)). The N-linked (GlcNAc...) asparagine glycan is linked to N204. Mn(2+)-binding residues include D227 and D229. N300 carries N-linked (GlcNAc...) asparagine glycosylation.

Belongs to the glycosyltransferase 49 family. Interacts with LARGE1 and LARGE2. Mn(2+) is required as a cofactor.

It localises to the golgi apparatus membrane. The catalysed reaction is 3-O-[beta-D-Xyl-(1-&gt;4)-Rib-ol-P-Rib-ol-P-3-beta-D-GalNAc-(1-&gt;3)-beta-D-GlcNAc-(1-&gt;4)-(O-6-P-alpha-D-Man)]-Thr-[protein] + UDP-alpha-D-glucuronate = 3-O-[beta-D-GlcA-(1-&gt;3)-beta-D-Xyl-(1-&gt;4)-Rib-ol-P-Rib-ol-P-3-beta-D-GalNAc-(1-&gt;3)-beta-D-GlcNAc-(1-&gt;4)-(O-6-P-alpha-D-Man)]-Thr-[protein] + UDP + H(+). Its pathway is protein modification; protein glycosylation. Its function is as follows. Beta-1,4-glucuronyltransferase involved in O-mannosylation of alpha-dystroglycan (DAG1). Transfers a glucuronic acid (GlcA) residue onto a xylose (Xyl) acceptor to produce the glucuronyl-beta-1,4-xylose-beta disaccharide primer, which is further elongated by LARGE1, during synthesis of phosphorylated O-mannosyl glycan. Phosphorylated O-mannosyl glycan is a carbohydrate structure present in alpha-dystroglycan (DAG1), which is required for binding laminin G-like domain-containing extracellular proteins with high affinity. Required for axon guidance; via its function in O-mannosylation of alpha-dystroglycan (DAG1). The chain is Beta-1,4-glucuronyltransferase 1 from Mus musculus (Mouse).